The chain runs to 100 residues: Replication restart protein PriB (100 aa).

The SSB domain maps to 4–99 (TNLVSLAALI…LRIQNIKEYK (96 aa)).

Belongs to the PriB family. As to quaternary structure, homodimer. Component of the replication restart primosome. Primosome assembly occurs via a 'hand-off' mechanism. PriA binds to replication forks, subsequently PriB then DnaT bind; DnaT then displaces ssDNA to generate the helicase loading substrate. Interacts with PriA with high affinity, independent of DNA presence.

Its activity is regulated as follows. PriA:PriB complex-catalyzed duplex DNA winding is inhibited by CGS 15943 (CHEBI:131351); PriA is the drug target. Stimulates the DNA unwinding activity of PriA helicase, which does not seem to require single-stranded (ss)DNA-binding by PriB. Activates DNA-dependent ATP hydrolysis catalyzed by PriA. Weakly binds ssDNA. Weakly binds double-stranded (ds)DNA, a partial duplex DNA with a 3' ssDNA overhang, and a forked DNA structure with fully duplex leading and lagging strand arms in vitro. Functionally, involved in the restart of stalled replication forks, which reloads the replicative helicase on sites other than the origin of replication; the PriA-PriB pathway is the major replication restart pathway. During primosome assembly it facilitates complex formation between PriA and DnaT on DNA; stabilizes PriA on DNA. Stimulates the DNA unwinding activity of PriA helicase. The polypeptide is Replication restart protein PriB (Neisseria gonorrhoeae (strain ATCC 700825 / FA 1090)).